A 189-amino-acid chain; its full sequence is Leucine repeat adapter protein 25 (189 aa).

Ser28 is modified (phosphoserine). The disordered stretch occupies residues 54–83; the sequence is ELSRAARAPDGPRHAAGAANAGPAAGPRRP. A compositionally biased stretch (low complexity) spans 67 to 83; it reads HAAGAANAGPAAGPRRP. An LRR repeat occupies 86–114; sequence LDSALAALRKEMVGLRQLDMSLLCQLWGL. Residues 141 to 175 are disordered; sequence DSSYPPDAGLSDDEEPPDASLPPDPPPLTVPQTHN. Positions 159-169 are enriched in pro residues; sequence ASLPPDPPPLT. Ser188 carries the post-translational modification Phosphoserine.

The protein belongs to the FAM89 family. As to quaternary structure, interacts with SKI. Interacts (via LRR repeat) with CDC42BPA (via AGC-kinase C-terminal domain), CDC42BPB (via AGC-kinase C-terminal domain) and LIMK1 (via LIM zinc-binding domains). Forms a tripartite complex with CDC42BPA, CDC42BPB and LIMK1.

The protein resides in the cytoplasm. It is found in the cell projection. The protein localises to the lamellipodium. In terms of biological role, negatively regulates TGF-beta-induced signaling; in cooperation with SKI prevents the translocation of SMAD2 from the nucleus to the cytoplasm in response to TGF-beta. Acts as an adapter that mediates the specific recognition of LIMK1 by CDC42BPA and CDC42BPB in the lamellipodia. LRAP25-mediated CDC42BPA/CDC42BPB targeting to LIMK1 and the lamellipodium results in LIMK1 activation and the subsequent phosphorylation of CFL1 which is important for lamellipodial F-actin regulation. In Homo sapiens (Human), this protein is Leucine repeat adapter protein 25 (FAM89B).